Here is a 198-residue protein sequence, read N- to C-terminus: Large ribosomal subunit protein bL25 (198 aa).

Belongs to the bacterial ribosomal protein bL25 family. CTC subfamily. Part of the 50S ribosomal subunit; part of the 5S rRNA/L5/L18/L25 subcomplex. Contacts the 5S rRNA. Binds to the 5S rRNA independently of L5 and L18.

This is one of the proteins that binds to the 5S RNA in the ribosome where it forms part of the central protuberance. The sequence is that of Large ribosomal subunit protein bL25 from Pseudomonas putida (strain W619).